We begin with the raw amino-acid sequence, 123 residues long: Histone H2B (123 aa).

Residues 1–30 are disordered; the sequence is MPPKTSGKAAKKAGKAQKNITKTDKKKKRK. Residue P2 is modified to N-methylproline; partial. Residue K44 is modified to N6-succinyllysine. O-linked (GlcNAc) serine glycosylation occurs at S110. An N6-succinyllysine mark is found at K114 and K118. A Glycyl lysine isopeptide (Lys-Gly) (interchain with G-Cter in ubiquitin) cross-link involves residue K118.

The protein belongs to the histone H2B family. In terms of assembly, the nucleosome is a histone octamer containing two molecules each of H2A, H2B, H3 and H4 assembled in one H3-H4 heterotetramer and two H2A-H2B heterodimers. The octamer wraps approximately 147 bp of DNA. In terms of processing, phosphorylated by the catalytic component of the Dbf4-dependent kinase (DDK) complex Cdc7. Monoubiquitination of Lys-118 by Bre1 gives a specific tag for epigenetic transcriptional activation and is also prerequisite for histone H3 'Lys-4' and 'Lys-79' methylation. Deubiquitination of Lys-118 by the SAGA complex is involved in activating transcription of a large subset of genes. Post-translationally, methylation at Pro-2 increases upon heat shock. In terms of processing, glcNAcylation at Ser-110 promotes monoubiquitination of Lys-118. It fluctuates in response to extracellular glucose, and associates with transcribed genes.

The protein resides in the nucleus. The protein localises to the chromosome. Core component of nucleosome. Nucleosomes wrap and compact DNA into chromatin, limiting DNA accessibility to the cellular machineries which require DNA as a template. Histones thereby play a central role in transcription regulation, DNA repair, DNA replication and chromosomal stability. DNA accessibility is regulated via a complex set of post-translational modifications of histones, also called histone code, and nucleosome remodeling. The sequence is that of Histone H2B (His2B) from Drosophila erecta (Fruit fly).